Consider the following 494-residue polypeptide: Aspartyl/glutamyl-tRNA(Asn/Gln) amidotransferase subunit B (494 aa).

The protein belongs to the GatB/GatE family. GatB subfamily. As to quaternary structure, heterotrimer of A, B and C subunits.

The enzyme catalyses L-glutamyl-tRNA(Gln) + L-glutamine + ATP + H2O = L-glutaminyl-tRNA(Gln) + L-glutamate + ADP + phosphate + H(+). It catalyses the reaction L-aspartyl-tRNA(Asn) + L-glutamine + ATP + H2O = L-asparaginyl-tRNA(Asn) + L-glutamate + ADP + phosphate + 2 H(+). Functionally, allows the formation of correctly charged Asn-tRNA(Asn) or Gln-tRNA(Gln) through the transamidation of misacylated Asp-tRNA(Asn) or Glu-tRNA(Gln) in organisms which lack either or both of asparaginyl-tRNA or glutaminyl-tRNA synthetases. The reaction takes place in the presence of glutamine and ATP through an activated phospho-Asp-tRNA(Asn) or phospho-Glu-tRNA(Gln). This is Aspartyl/glutamyl-tRNA(Asn/Gln) amidotransferase subunit B from Synechococcus elongatus (strain ATCC 33912 / PCC 7942 / FACHB-805) (Anacystis nidulans R2).